The chain runs to 109 residues: MLSVSRVASRMTGVVARFSTGGHGDGAGRGGGSGGSIRDAGGAFGKMEAAREDEYFYKKQKAQLEELRKHIQQEVDHHKSQLENHQKVLDRHQKRISEIEAEERALGKE.

Disordered stretches follow at residues 17-39 (RFST…SIRD) and 73-95 (QEVD…HQKR). Over residues 21–35 (GGHGDGAGRGGGSGG) the composition is skewed to gly residues. Positions 45-109 (GKMEAAREDE…EAEERALGKE (65 aa)) form a coiled coil.

Belongs to the ATPase inhibitor family.

It localises to the mitochondrion. Its function is as follows. Thought to be a regulatory component of the ATP-synthesizing complex in the mitochondria. This chain is ATPase inhibitor mai-2, mitochondrial, found in Caenorhabditis briggsae.